A 399-amino-acid polypeptide reads, in one-letter code: Forkhead box protein A4-A (399 aa).

Residues 119 to 213 constitute a DNA-binding region (fork-head); the sequence is KPPYSYISLI…ENGCYLRRQK (95 aa). Basic and acidic residues predominate over residues 219–234; that stretch reads RSKSGEGEKKVNKPGE. The segment at 219 to 290 is disordered; that stretch reads RSKSGEGEKK…VGLSPTSEQA (72 aa). Residues 267–277 are compositionally biased toward polar residues; it reads STGSSIHQACG.

As to expression, during stages 8.5 to 10, expressed in the part of the dorsal mesoderm invaginating the dorsal blastopore lip (Spemann organizer), as a direct response to dorsal mesodermal induction. At stage 12 (mid-gastrulation), restricted to the dorsal midline in the deeper layers of mesodermal cells. Continuously present in the posterior portion of invaginated mesoderm and expressed within the notochord. Also present in the midline of the neural plate during gastrulation, but absent from the notoplate in exogastrula embryos. Expression in the notochord continues in neurula-stage embryos and at stage 20 in addition to the notochord, expression is seen in the pharyngeal endoderm.

Its subcellular location is the nucleus. Transcriptional repressor involved in embryonic nervous system development. Plays a role in the induction and patterning of the anterior-posterior neural axis. Involved in the establishment of floor plate differentiation from neural plate cells during gastrulation. Binds the anf1 promoter sequence to restrict expression of anf1 to the anterior of the neural plate, thereby patterning the forebrain. Can bind to the HNF-3-alpha DNA target sequence. Cooperates with t/bra in a dose-dependent manner to specify dorsal mesoderm formation, including notochord. Binds to DNA via the target sequence 5'-[GA]TAAA[TC]A-3', with 5'-GTAAATA-3' being the preferred binding site. In Xenopus laevis (African clawed frog), this protein is Forkhead box protein A4-A (foxa4-a).